Here is a 241-residue protein sequence, read N- to C-terminus: ATP synthase subunit a (241 aa).

8 consecutive transmembrane segments (helical) span residues 29–49 (NSSL…LFGI), 54–74 (VIPG…ISII), 86–106 (IPLI…GVLP), 114–134 (HVIV…IVGF), 153–173 (WLAP…PVSL), 177–197 (LAAN…FIVN), 200–220 (IFFT…EVFV), and 221–241 (AILQ…DAVK).

The protein belongs to the ATPase A chain family. F-type ATPases have 2 components, CF(1) - the catalytic core - and CF(0) - the membrane proton channel. CF(1) has five subunits: alpha(3), beta(3), gamma(1), delta(1), epsilon(1). CF(0) has three main subunits: a(1), b(2) and c(9-12). The alpha and beta chains form an alternating ring which encloses part of the gamma chain. CF(1) is attached to CF(0) by a central stalk formed by the gamma and epsilon chains, while a peripheral stalk is formed by the delta and b chains.

It localises to the cell inner membrane. Its function is as follows. Key component of the proton channel; it plays a direct role in the translocation of protons across the membrane. The chain is ATP synthase subunit a from Wolbachia sp. subsp. Drosophila simulans (strain wRi).